A 103-amino-acid chain; its full sequence is Flagellar hook-basal body complex protein FliE (103 aa).

It belongs to the FliE family.

It is found in the bacterial flagellum basal body. This Helicobacter hepaticus (strain ATCC 51449 / 3B1) protein is Flagellar hook-basal body complex protein FliE.